The sequence spans 423 residues: Glucose-1-phosphate adenylyltransferase (423 aa).

Alpha-D-glucose 1-phosphate-binding positions include Tyr98, Gly163, Glu178–Lys179, and Ser189.

This sequence belongs to the bacterial/plant glucose-1-phosphate adenylyltransferase family. Homotetramer.

It carries out the reaction alpha-D-glucose 1-phosphate + ATP + H(+) = ADP-alpha-D-glucose + diphosphate. The protein operates within glycan biosynthesis; glycogen biosynthesis. Its function is as follows. Involved in the biosynthesis of ADP-glucose, a building block required for the elongation reactions to produce glycogen. Catalyzes the reaction between ATP and alpha-D-glucose 1-phosphate (G1P) to produce pyrophosphate and ADP-Glc. The polypeptide is Glucose-1-phosphate adenylyltransferase (Thermotoga maritima (strain ATCC 43589 / DSM 3109 / JCM 10099 / NBRC 100826 / MSB8)).